The following is a 115-amino-acid chain: Cell division topological specificity factor (115 aa).

Residues 93 to 115 (QLKEPKNQSELDSPETEGTDQKS) are disordered. Residues 104–115 (DSPETEGTDQKS) show a composition bias toward acidic residues.

The protein belongs to the MinE family.

In terms of biological role, prevents the cell division inhibition by proteins MinC and MinD at internal division sites while permitting inhibition at polar sites. This ensures cell division at the proper site by restricting the formation of a division septum at the midpoint of the long axis of the cell. The polypeptide is Cell division topological specificity factor (Prochlorococcus marinus (strain NATL1A)).